A 255-amino-acid polypeptide reads, in one-letter code: Putative keratin-87 protein (255 aa).

The IF rod domain maps to 1-255; sequence MEANSGRLAS…SRGCVRALVL (255 aa). Coiled-coil stretches lie at residues 19–81 and 147–227; these read LEGY…EIRV and LRRT…VMNS.

The protein belongs to the intermediate filament family. In terms of assembly, heterotetramer of two type I and two type II keratins.

This is Putative keratin-87 protein (KRT87P) from Homo sapiens (Human).